Consider the following 120-residue polypeptide: Large ribosomal subunit protein bL20 (120 aa).

Belongs to the bacterial ribosomal protein bL20 family.

Binds directly to 23S ribosomal RNA and is necessary for the in vitro assembly process of the 50S ribosomal subunit. It is not involved in the protein synthesizing functions of that subunit. This chain is Large ribosomal subunit protein bL20, found in Xanthobacter autotrophicus (strain ATCC BAA-1158 / Py2).